Here is an 89-residue protein sequence, read N- to C-terminus: Large ribosomal subunit protein bL31B (89 aa).

The segment at 70-89 is disordered; it reads RVQRFESRRRRRQQQSGEQG.

Belongs to the bacterial ribosomal protein bL31 family. Type B subfamily. In terms of assembly, part of the 50S ribosomal subunit.

This Rubrobacter xylanophilus (strain DSM 9941 / JCM 11954 / NBRC 16129 / PRD-1) protein is Large ribosomal subunit protein bL31B.